Reading from the N-terminus, the 242-residue chain is Ribonuclease PH (242 aa).

Residues R86 and G124–R126 contribute to the phosphate site.

The protein belongs to the RNase PH family. Homohexameric ring arranged as a trimer of dimers.

The enzyme catalyses tRNA(n+1) + phosphate = tRNA(n) + a ribonucleoside 5'-diphosphate. Its function is as follows. Phosphorolytic 3'-5' exoribonuclease that plays an important role in tRNA 3'-end maturation. Removes nucleotide residues following the 3'-CCA terminus of tRNAs; can also add nucleotides to the ends of RNA molecules by using nucleoside diphosphates as substrates, but this may not be physiologically important. Probably plays a role in initiation of 16S rRNA degradation (leading to ribosome degradation) during starvation. In Photorhabdus laumondii subsp. laumondii (strain DSM 15139 / CIP 105565 / TT01) (Photorhabdus luminescens subsp. laumondii), this protein is Ribonuclease PH.